The following is a 432-amino-acid chain: Adenylosuccinate synthetase (432 aa).

GTP is bound by residues 11 to 17 (GDEGKGK) and 39 to 41 (GHT). D12 functions as the Proton acceptor in the catalytic mechanism. Residues D12 and G39 each contribute to the Mg(2+) site. IMP is bound by residues 12-15 (DEGK), 37-40 (NAGH), T134, R148, N230, T245, and R309. Residue H40 is the Proton donor of the active site. 305–311 (VTTGRKR) provides a ligand contact to substrate. Residues R311, 337 to 339 (KLD), and 419 to 421 (GTG) contribute to the GTP site.

The protein belongs to the adenylosuccinate synthetase family. In terms of assembly, homodimer. Requires Mg(2+) as cofactor.

The protein localises to the cytoplasm. The catalysed reaction is IMP + L-aspartate + GTP = N(6)-(1,2-dicarboxyethyl)-AMP + GDP + phosphate + 2 H(+). Its pathway is purine metabolism; AMP biosynthesis via de novo pathway; AMP from IMP: step 1/2. Its function is as follows. Plays an important role in the de novo pathway and in the salvage pathway of purine nucleotide biosynthesis. Catalyzes the first committed step in the biosynthesis of AMP from IMP. This is Adenylosuccinate synthetase from Kluyveromyces lactis (strain ATCC 8585 / CBS 2359 / DSM 70799 / NBRC 1267 / NRRL Y-1140 / WM37) (Yeast).